Consider the following 119-residue polypeptide: Large ribosomal subunit protein P3 (119 aa).

The segment at 81-119 (GAAAGAASGGAAAEAPKAEEKKEEEKEESEDDLGFSLFD) is disordered. Low complexity predominate over residues 84-95 (AGAASGGAAAEA).

It belongs to the eukaryotic ribosomal protein P1/P2 family. In terms of processing, phosphorylated.

In terms of biological role, plays an important role in the elongation step of protein synthesis. This Oryza sativa subsp. japonica (Rice) protein is Large ribosomal subunit protein P3.